A 235-amino-acid polypeptide reads, in one-letter code: Peptidyl-tRNA hydrolase (235 aa).

Y14 contacts tRNA. The active-site Proton acceptor is H19. 3 residues coordinate tRNA: F64, N66, and N112. The segment at 188–235 (APARNSGTRPDNPGKGSPEKPAAKPANDPIAEPPSLSDRLRALTERFR) is disordered. A compositionally biased stretch (basic and acidic residues) spans 225–235 (DRLRALTERFR).

This sequence belongs to the PTH family. In terms of assembly, monomer.

The protein resides in the cytoplasm. It catalyses the reaction an N-acyl-L-alpha-aminoacyl-tRNA + H2O = an N-acyl-L-amino acid + a tRNA + H(+). Its function is as follows. Hydrolyzes ribosome-free peptidyl-tRNAs (with 1 or more amino acids incorporated), which drop off the ribosome during protein synthesis, or as a result of ribosome stalling. In terms of biological role, catalyzes the release of premature peptidyl moieties from peptidyl-tRNA molecules trapped in stalled 50S ribosomal subunits, and thus maintains levels of free tRNAs and 50S ribosomes. This is Peptidyl-tRNA hydrolase from Paracoccus denitrificans (strain Pd 1222).